Reading from the N-terminus, the 139-residue chain is Protein FAM216B (139 aa).

It belongs to the FAM216 family.

This is Protein FAM216B (FAM216B) from Homo sapiens (Human).